A 360-amino-acid polypeptide reads, in one-letter code: G-protein coupled receptor 15 (360 aa).

The Extracellular segment spans residues 1–33 (MEPATALLIVDYYDYTSPDPPFLETPSHLSYTS). The helical transmembrane segment at 34–54 (VFLPIFYTVVFLTGVVGNFIL) threads the bilayer. Topologically, residues 55–69 (MIALHFKRGNRRLID) are cytoplasmic. The helical transmembrane segment at 70-90 (IFIINLAASDFIFLVTVPLWM) threads the bilayer. The Extracellular segment spans residues 91-120 (DKEASLGLWRTGSFLCKGSSYVISVNMHCS). The chain crosses the membrane as a helical span at residues 121–141 (VFLLTCMSMDRYLAIMHPALA). Topologically, residues 142 to 149 (KRLRRRSS) are cytoplasmic. Residues 150 to 170 (AYAVCAVVWIISCVLGLPTLL) traverse the membrane as a helical segment. Over 171–192 (SRELTHIEGKPYCAEKKPTSLK) the chain is Extracellular. A helical transmembrane segment spans residues 193 to 213 (LMWGLVALITTFFVPLLSIVT). Topologically, residues 214 to 239 (CYCCITRRLCAHYQQSGKHNKKLKKS) are cytoplasmic. The helical transmembrane segment at 240–260 (IKIVIIAVAAFTVSWVPFNTF) threads the bilayer. At 261-284 (KLLAIVSGFQPEGLFHSEALQLAM) the chain is on the extracellular side. A helical transmembrane segment spans residues 285 to 305 (NVTGPLAFASSCVNPLIYYVF). Residues 306 to 360 (DSYIRRAIVRCLCPCLKTHNFGSSTETSDSHLTKALSNFIHAEDFIRRRKRSVSL) are Cytoplasmic-facing. At Ser-359 the chain carries Phosphoserine.

It belongs to the G-protein coupled receptor 1 family. In terms of assembly, interacts with adapter YWHAE; this interaction promotes ER-to-Golgi transport of GPR15. Phosphorylation is necessary for YWHAE binding and efficient surface expression. In terms of processing, O-glycosylated. Sialylated O-glycans in the N-terminal tail inhibits binding of GPR15LG. Post-translationally, sulfation is required for efficient binding of GPR15LG. In terms of tissue distribution, highly expressed in gut tissues and lymphoid organs, largely restricted to TCRbeta+ cells. Expressed in fetal thymic dendritic epidermal T-cell precursors.

Its subcellular location is the cell membrane. Its function is as follows. G protein-coupled receptor that plays an important role in immune homeostasis. Acts via its natural ligand GPR15LG, a chemokine-like polypeptide strongly expressed in gastrointestinal tissues. GPR15-GPR15LG signaling axis regulates intestinal homeostasis and inflammation through the migration of immune cells. Controls thereby the specific homing of T-cells, particularly FOXP3+ regulatory T-cells (Tregs), to the large intestine lamina propria. Also required for skin localization of thymus-derived dendritic epidermal T-cells. Plays an important role in mediating cytoprotective function as well as angiogenesis of thrombomodulin. Mechanistically, preferentially signals through the Gi/o pathway to inhibit adenylate cyclase activity and activate a phosphatidylinositol-calcium second messenger system that regulates the release of Ca(2+) ions from intracellular stores. The protein is G-protein coupled receptor 15 (Gpr15) of Mus musculus (Mouse).